The following is a 529-amino-acid chain: uncharacterized protein (529 aa).

Residues 1 to 11 are compositionally biased toward basic and acidic residues; the sequence is MSSSKIKELRE. Disordered regions lie at residues 1–222, 237–256, 271–372, and 393–488; these read MSSS…IPYS, PFLE…EENV, AFLQ…TAAP, and GSGN…PSFT. Over residues 27–40 the composition is skewed to polar residues; sequence MQQNQPRPATTTPP. A compositionally biased stretch (basic residues) spans 83-95; the sequence is TKGRAHPRSRRPP. Residues 110-125 show a composition bias toward polar residues; the sequence is NTGSTKAADTKSSVEA. A Phosphoserine modification is found at Ser-128. Residues 170–199 are compositionally biased toward polar residues; it reads TTKAVEATTSKASSAHTDTLATSASNSDRG. Ser-217 is subject to Phosphoserine. The segment covering 237 to 249 has biased composition (polar residues); it reads PFLESKVLPQNNE. Over residues 321–334 the composition is skewed to low complexity; it reads SSPLSFSASKSPAA. The segment covering 336–362 has biased composition (polar residues); it reads DSSTKTPTEQVNVVSKQAPTTSSTSVI. Positions 409 to 426 are enriched in basic and acidic residues; the sequence is ERTKSLSKESPVEPEKPA. Residues 430 to 455 show a composition bias toward polar residues; sequence ATSSSTPTTENKESWTNQGIKSSQQR. A compositionally biased stretch (low complexity) spans 456-470; sequence SANASPATSPSNQAS. Residues 471 to 488 are compositionally biased toward polar residues; that stretch reads IHASFTKESSTHSSPSFT.

The protein resides in the cytoplasm. This is an uncharacterized protein from Schizosaccharomyces pombe (strain 972 / ATCC 24843) (Fission yeast).